Consider the following 119-residue polypeptide: Holo-[acyl-carrier-protein] synthase (119 aa).

Residues Asp-8 and Glu-58 each contribute to the Mg(2+) site.

It belongs to the P-Pant transferase superfamily. AcpS family. Requires Mg(2+) as cofactor.

The protein localises to the cytoplasm. It carries out the reaction apo-[ACP] + CoA = holo-[ACP] + adenosine 3',5'-bisphosphate + H(+). Its function is as follows. Transfers the 4'-phosphopantetheine moiety from coenzyme A to a Ser of acyl-carrier-protein. The protein is Holo-[acyl-carrier-protein] synthase of Halalkalibacterium halodurans (strain ATCC BAA-125 / DSM 18197 / FERM 7344 / JCM 9153 / C-125) (Bacillus halodurans).